A 142-amino-acid chain; its full sequence is ATP synthase epsilon chain (142 aa).

The protein belongs to the ATPase epsilon chain family. F-type ATPases have 2 components, CF(1) - the catalytic core - and CF(0) - the membrane proton channel. CF(1) has five subunits: alpha(3), beta(3), gamma(1), delta(1), epsilon(1). CF(0) has three main subunits: a, b and c.

It localises to the cell inner membrane. Produces ATP from ADP in the presence of a proton gradient across the membrane. The chain is ATP synthase epsilon chain from Maridesulfovibrio salexigens (strain ATCC 14822 / DSM 2638 / NCIMB 8403 / VKM B-1763) (Desulfovibrio salexigens).